A 546-amino-acid polypeptide reads, in one-letter code: MGSGCSSPSISLTTIATSHFQSQESLSNSLNFYSPTRFLEPHLLKSSKIFIPKSPLKCAKVPEMQTQLEDSAKPIVDPHDIDSKLVQKLANDALVWCPLRGLLVGDRNSERSGTIPGVDMVHAPVALIPMSFPESHWKQACEVAPIFNELVDRVSQDGEFLQQSLSRTRKADPFTSRLLEIHSKMLEINKLEEIRLGLHRSDYMLDEQTKLLLQIELNTISSSFPGLSCLVSELHRSLLQQYREDIASDPNRIPANNAVNQFAEALAKAWNEYGDPRAVIIFVVQAEERNMYDQHWLSASLRERHQVTTIRKTLAEIDALGELQQDGTLVVDGQAVAVIYFRAGYAPSDYHSESEWKARLLMEQSRAVKCPSISYHLAGSKKIQQELAKPNVLERFLENKDDIAKLRKCFAGLWSLDESDIVKDAIERPELYVMKPQREGGGNNIYGEDVRGALLKLQKEGTGSDAAYILMQRIFPKISHSILMREGISHKEETISELGIYGTYLRNKTEVLINQQAGYLMRTKVSSSDEGGVAAGFAVLDSIYLV.

The transit peptide at Met-1 to Glu-63 directs the protein to the chloroplast. A substrate-binding site is contributed by Arg-200. Glu-216 is an ATP binding site. The Mg(2+) site is built by Glu-216 and Asn-218. Substrate contacts are provided by residues Ile-220–Ser-223, Glu-288–Asn-290, Gln-294, and Arg-342–Tyr-345. ATP contacts are provided by residues Lys-381, Lys-435–Asn-444, Tyr-446, Met-471–Ile-474, and Glu-497. Residue Glu-439 participates in Mg(2+) binding. Arg-522 contributes to the substrate binding site. Lys-524 and Glu-530 together coordinate ATP. Val-533–Ala-534 contributes to the substrate binding site.

It belongs to the eukaryotic GSH synthase family. Homodimer. It depends on Mg(2+) as a cofactor.

Its subcellular location is the plastid. The protein resides in the chloroplast. It carries out the reaction gamma-L-glutamyl-L-cysteine + glycine + ATP = glutathione + ADP + phosphate + H(+). It functions in the pathway sulfur metabolism; glutathione biosynthesis; glutathione from L-cysteine and L-glutamate: step 2/2. The chain is Glutathione synthetase, chloroplastic (GSH2) from Solanum lycopersicum (Tomato).